The following is a 283-amino-acid chain: ATP phosphoribosyltransferase (283 aa).

It belongs to the ATP phosphoribosyltransferase family. Long subfamily. Mg(2+) serves as cofactor.

It localises to the cytoplasm. The enzyme catalyses 1-(5-phospho-beta-D-ribosyl)-ATP + diphosphate = 5-phospho-alpha-D-ribose 1-diphosphate + ATP. It functions in the pathway amino-acid biosynthesis; L-histidine biosynthesis; L-histidine from 5-phospho-alpha-D-ribose 1-diphosphate: step 1/9. Feedback inhibited by histidine. Catalyzes the condensation of ATP and 5-phosphoribose 1-diphosphate to form N'-(5'-phosphoribosyl)-ATP (PR-ATP). Has a crucial role in the pathway because the rate of histidine biosynthesis seems to be controlled primarily by regulation of HisG enzymatic activity. The polypeptide is ATP phosphoribosyltransferase (Methanopyrus kandleri (strain AV19 / DSM 6324 / JCM 9639 / NBRC 100938)).